Consider the following 393-residue polypeptide: Epoxyqueuosine reductase (393 aa).

D154 serves as the catalytic Proton donor. Positions 196 to 228 (LPLPVDIPVQEGCHSCVACITSCPTGAIVEPYT) constitute a 4Fe-4S ferredoxin-type domain. Residues C208, C211, C214, C218, C234, C261, C264, and C268 each coordinate [4Fe-4S] cluster.

The protein belongs to the QueG family. In terms of assembly, monomer. It depends on cob(II)alamin as a cofactor. [4Fe-4S] cluster serves as cofactor.

The protein resides in the cytoplasm. The enzyme catalyses epoxyqueuosine(34) in tRNA + AH2 = queuosine(34) in tRNA + A + H2O. It functions in the pathway tRNA modification; tRNA-queuosine biosynthesis. Its function is as follows. Catalyzes the conversion of epoxyqueuosine (oQ) to queuosine (Q), which is a hypermodified base found in the wobble positions of tRNA(Asp), tRNA(Asn), tRNA(His) and tRNA(Tyr). This chain is Epoxyqueuosine reductase, found in Shewanella oneidensis (strain ATCC 700550 / JCM 31522 / CIP 106686 / LMG 19005 / NCIMB 14063 / MR-1).